A 581-amino-acid chain; its full sequence is Laccase-2 (581 aa).

The N-terminal stretch at 1-19 (MKYSTVFTALTALFAQASA) is a signal peptide. Plastocyanin-like domains lie at 74 to 191 (SVEN…GPAT) and 197 to 353 (DVGA…YDSS). Asn77, Asn93, and Asn120 each carry an N-linked (GlcNAc...) asparagine glycan. Residues His125, His127, His169, and His171 each contribute to the Cu cation site. Residues Cys146 and Cys562 are joined by a disulfide bond. N-linked (GlcNAc...) asparagine glycosylation is found at Asn232, Asn283, Asn343, Asn408, Asn427, and Asn441. The Plastocyanin-like 3 domain occupies 413-547 (LLDWSSPTTL…AMQFVESQSS (135 aa)). 7 residues coordinate Cu cation: His464, His467, His469, His526, Cys527, His528, and His532.

Belongs to the multicopper oxidase family. It depends on Cu cation as a cofactor.

Its subcellular location is the secreted. It carries out the reaction 4 hydroquinone + O2 = 4 benzosemiquinone + 2 H2O. In terms of biological role, lignin degradation and detoxification of lignin-derived products. In Botryotinia fuckeliana (Noble rot fungus), this protein is Laccase-2 (lcc2).